The chain runs to 693 residues: Elongation factor G (693 aa).

Residues 8-283 (NRIRNIGIAA…AVIDYLPAPT (276 aa)) form the tr-type G domain. Residues 17–24 (AHIDAGKT), 81–85 (DTPGH), and 135–138 (NKMD) each bind GTP.

This sequence belongs to the TRAFAC class translation factor GTPase superfamily. Classic translation factor GTPase family. EF-G/EF-2 subfamily.

Its subcellular location is the cytoplasm. Catalyzes the GTP-dependent ribosomal translocation step during translation elongation. During this step, the ribosome changes from the pre-translocational (PRE) to the post-translocational (POST) state as the newly formed A-site-bound peptidyl-tRNA and P-site-bound deacylated tRNA move to the P and E sites, respectively. Catalyzes the coordinated movement of the two tRNA molecules, the mRNA and conformational changes in the ribosome. The chain is Elongation factor G from Wolinella succinogenes (strain ATCC 29543 / DSM 1740 / CCUG 13145 / JCM 31913 / LMG 7466 / NCTC 11488 / FDC 602W) (Vibrio succinogenes).